Reading from the N-terminus, the 1077-residue chain is Endo-1,4-beta-xylanase Y (1077 aa).

The N-terminal stretch at 1–26 (MKNKRVLAKITALVVLLGVFFVLPSN) is a signal peptide. Residues 33-180 (DYEVVHDTFE…IFDDVTITRK (148 aa)) form the CBM-cenC 1 domain. The region spanning 189–538 (YAANAVLKDM…KPAYNAVASI (350 aa)) is the GH10 domain. The active-site Proton donor is the E337. The Nucleophile role is filled by E460. Residues 543 to 563 (EWGDGNNPAGGGGGGKPEEPD) form a disordered region. In terms of domain architecture, CBM-cenC 2 spans 565–714 (NGYYYHDTFE…YIDEAIGAVA (150 aa)). Positions 728–796 (PPVLLGDVNG…LLRVIDKFPV (69 aa)) constitute a Dockerin domain.

This sequence belongs to the glycosyl hydrolase 10 (cellulase F) family.

The enzyme catalyses Endohydrolysis of (1-&gt;4)-beta-D-xylosidic linkages in xylans.. This Acetivibrio thermocellus (Hungateiclostridium thermocellum) protein is Endo-1,4-beta-xylanase Y (xynY).